The sequence spans 240 residues: Ubiquinone biosynthesis O-methyltransferase (240 aa).

S-adenosyl-L-methionine-binding residues include R36, G60, D81, and L123.

It belongs to the methyltransferase superfamily. UbiG/COQ3 family.

It carries out the reaction a 3-demethylubiquinol + S-adenosyl-L-methionine = a ubiquinol + S-adenosyl-L-homocysteine + H(+). It catalyses the reaction a 3-(all-trans-polyprenyl)benzene-1,2-diol + S-adenosyl-L-methionine = a 2-methoxy-6-(all-trans-polyprenyl)phenol + S-adenosyl-L-homocysteine + H(+). It functions in the pathway cofactor biosynthesis; ubiquinone biosynthesis. In terms of biological role, O-methyltransferase that catalyzes the 2 O-methylation steps in the ubiquinone biosynthetic pathway. This Rickettsia bellii (strain OSU 85-389) protein is Ubiquinone biosynthesis O-methyltransferase.